The following is a 58-amino-acid chain: Small ribosomal subunit protein bS21 (58 aa).

Residues 31–42 show a composition bias toward basic and acidic residues; the sequence is EIRKREHYEKPS. Positions 31 to 58 are disordered; that stretch reads EIRKREHYEKPSVKRKKKSEAARKRKYN. A compositionally biased stretch (basic residues) spans 43–58; it reads VKRKKKSEAARKRKYN.

This sequence belongs to the bacterial ribosomal protein bS21 family.

This is Small ribosomal subunit protein bS21 from Agathobacter rectalis (strain ATCC 33656 / DSM 3377 / JCM 17463 / KCTC 5835 / VPI 0990) (Eubacterium rectale).